A 268-amino-acid polypeptide reads, in one-letter code: Protein MGF 300-1L (268 aa).

Topologically, residues 1 to 175 (MVSLTTCCLK…QTFKTFYAKN (175 aa)) are cytoplasmic. A helical membrane pass occupies residues 176-193 (YSLSTLYCIFLAIYYKLY). The Extracellular portion of the chain corresponds to 194–268 (TALRKMVKIY…MYAFSQNDYW (75 aa)).

The protein belongs to the asfivirus MGF 300 family.

It localises to the host membrane. Plays a role in virus cell tropism, and may be required for efficient virus replication in macrophages. In Ornithodoros (relapsing fever ticks), this protein is Protein MGF 300-1L.